Reading from the N-terminus, the 218-residue chain is Adenylate kinase (218 aa).

Gly10–Thr15 contributes to the ATP binding site. The interval Ser30–Val59 is NMP. Residues Thr31, Arg36, Lys57 to Val59, Gly85 to Arg88, and Gln92 each bind AMP. The tract at residues Gly122–Asp159 is LID. ATP contacts are provided by residues Arg123 and Thr132–Tyr133. AMP is bound by residues Arg156 and Arg167. An ATP-binding site is contributed by Gly203.

It belongs to the adenylate kinase family. Monomer.

It is found in the cytoplasm. It catalyses the reaction AMP + ATP = 2 ADP. Its pathway is purine metabolism; AMP biosynthesis via salvage pathway; AMP from ADP: step 1/1. Functionally, catalyzes the reversible transfer of the terminal phosphate group between ATP and AMP. Plays an important role in cellular energy homeostasis and in adenine nucleotide metabolism. The sequence is that of Adenylate kinase from Prosthecochloris aestuarii (strain DSM 271 / SK 413).